Reading from the N-terminus, the 262-residue chain is Nurim (262 aa).

Topologically, residues 1–4 (MAPA) are nuclear. The helical transmembrane segment at 5–28 (LLLVPAALASFILAFGTGVEFVRF) threads the bilayer. Topologically, residues 29-58 (TSLRPLLGGIPESGGPDARQGWLAALQDRS) are perinuclear space. A helical membrane pass occupies residues 59–80 (ILAPLAWDLGLLLLFVGQHSLM). Topologically, residues 81–97 (AAERVKAWTSRYFGVLQ) are nuclear. A helical membrane pass occupies residues 98-114 (RSLYVACTALALQLVMR). Topologically, residues 115-133 (YWEPIPKGPVLWEARAEPW) are perinuclear space. Residues 134 to 164 (ATWVPLLCFVLHVISWLLIFSILLVFDYAEL) traverse the membrane as a helical segment. At 165–191 (MGLKQVYYHVLGLGEPLALKSPRALRL) the chain is on the nuclear side. The chain crosses the membrane as a helical span at residues 192 to 210 (FSHLRHPVCVELLTVLWVV). Over 211-216 (PTLGTD) the chain is Perinuclear space. A helical membrane pass occupies residues 217 to 234 (RLLLAFLLTLYLGLAHGL). Topologically, residues 235 to 262 (DQQDLRYLRAQLQRKLHLLSRPQDGEAE) are nuclear.

It belongs to the nurim family.

It localises to the nucleus inner membrane. The sequence is that of Nurim (NRM) from Pan troglodytes (Chimpanzee).